We begin with the raw amino-acid sequence, 316 residues long: HPr kinase/phosphorylase (316 aa).

Residues His-143 and Lys-164 contribute to the active site. Residue 158 to 165 (GEAGSGKS) participates in ATP binding. Residue Ser-165 coordinates Mg(2+). Asp-182 serves as the catalytic Proton acceptor; for phosphorylation activity. Proton donor; for dephosphorylation activity. The tract at residues 206 to 215 (LEVRGLGVLN) is important for the catalytic mechanism of both phosphorylation and dephosphorylation. Glu-207 provides a ligand contact to Mg(2+). Arg-251 is a catalytic residue. Residues 272–277 (PVMPGR) are important for the catalytic mechanism of dephosphorylation.

This sequence belongs to the HPrK/P family. In terms of assembly, homohexamer. It depends on Mg(2+) as a cofactor.

The enzyme catalyses [HPr protein]-L-serine + ATP = [HPr protein]-O-phospho-L-serine + ADP + H(+). The catalysed reaction is [HPr protein]-O-phospho-L-serine + phosphate + H(+) = [HPr protein]-L-serine + diphosphate. Functionally, catalyzes the ATP- as well as the pyrophosphate-dependent phosphorylation of a specific serine residue in HPr, a phosphocarrier protein of the phosphoenolpyruvate-dependent sugar phosphotransferase system (PTS). HprK/P also catalyzes the pyrophosphate-producing, inorganic phosphate-dependent dephosphorylation (phosphorolysis) of seryl-phosphorylated HPr (P-Ser-HPr). In Xanthomonas campestris pv. campestris (strain 8004), this protein is HPr kinase/phosphorylase.